Reading from the N-terminus, the 96-residue chain is Large ribosomal subunit protein uL23 (96 aa).

The protein belongs to the universal ribosomal protein uL23 family. As to quaternary structure, part of the 50S ribosomal subunit. Contacts protein L29, and trigger factor when it is bound to the ribosome.

Functionally, one of the early assembly proteins it binds 23S rRNA. One of the proteins that surrounds the polypeptide exit tunnel on the outside of the ribosome. Forms the main docking site for trigger factor binding to the ribosome. The sequence is that of Large ribosomal subunit protein uL23 from Vesicomyosocius okutanii subsp. Calyptogena okutanii (strain HA).